Consider the following 611-residue polypeptide: Developmental and secondary metabolism regulator veA (611 aa).

Disordered regions lie at residues 1–57, 222–497, and 511–611; these read MNRK…RPVD, RRRE…ASFD, and LEAS…PGHA. A compositionally biased stretch (polar residues) spans 14–23; it reads KSSATRTTND. A Velvet domain is found at 24-216; it reads GRAITYEMQV…AEQGCRVRIR (193 aa). The short motif at 38 to 43 is the Nuclear localization signal element; that stretch reads QRARAC. The segment covering 242-254 has biased composition (low complexity); the sequence is AARARASATPDPS. Over residues 274-290 the composition is skewed to polar residues; sequence SASNASHQSLGSISRRP. The segment covering 330 to 340 has biased composition (low complexity); the sequence is YPPNQFVQQQP. Pro residues predominate over residues 341–361; the sequence is PMQPPLPQYQPPNYPAPPPPV. Positions 362–377 are enriched in low complexity; sequence TAAQQPQPAQSYYNYP. A compositionally biased stretch (polar residues) spans 419-434; sequence RNSQQIPPTSQPTAYT. Composition is skewed to low complexity over residues 435–452 and 461–471; these read QPMQ…QHYQ and QASQHSSYSSM. The interval 455–499 is PEST; that stretch reads PPPPPSQASQHSSYSSMDLYNSRPAPIEPHHHGNTPASKASFDLP. Positions 511–533 are enriched in polar residues; that stretch reads LEASSPTSVAPTNAYFSGGQTPI.

It belongs to the velvet family. VeA subfamily. Component of the heterotrimeric velvet complex composed of laeA, veA and velB; VeA acting as a bridging protein between laeA and velB.

The protein resides in the nucleus. The protein localises to the cytoplasm. In terms of biological role, component of the velvet transcription factor complex that controls sexual/asexual developmental ratio in response to light, promoting sexual development in the darkness while stimulating asexual sporulation under illumination. The velvet complex hat acts as a global regulator for secondary metabolite gene expression. Controls the expression of the dothistromin gene cluster. Regulates hyphal growth and pigment formation. Acts as a positive regulator of virulence. The chain is Developmental and secondary metabolism regulator veA from Dothistroma septosporum (strain NZE10 / CBS 128990) (Red band needle blight fungus).